Here is a 187-residue protein sequence, read N- to C-terminus: Putative manganese efflux pump MntP (187 aa).

The next 6 helical transmembrane spans lie at 3–23 (FYSL…VSLC), 35–55 (HYLI…TIGY), 56–76 (FIGI…AFIL), 107–127 (LALA…FAFL), 129–149 (VNLL…CIIA), and 166–186 (LLGG…HLFF).

The protein belongs to the MntP (TC 9.B.29) family.

Its subcellular location is the cell inner membrane. Functionally, probably functions as a manganese efflux pump. The sequence is that of Putative manganese efflux pump MntP from Campylobacter jejuni subsp. doylei (strain ATCC BAA-1458 / RM4099 / 269.97).